The following is a 61-amino-acid chain: Putative neurotoxin-D (61 aa).

A signal peptide spans Met1–Ala19. 3 disulfide bridges follow: Cys31/Cys51, Cys37/Cys56, and Cys39/Cys58.

As to expression, expressed by the venom gland.

The protein localises to the secreted. The sequence is that of Putative neurotoxin-D from Lychas mucronatus (Chinese swimming scorpion).